The chain runs to 142 residues: uncharacterized protein (142 aa).

This is an uncharacterized protein from Pseudomonas putida (Arthrobacter siderocapsulatus).